The primary structure comprises 165 residues: MSPKKAKKRAEGANSNVFSMFEQTQIQEFKEAFTIMDQNRDGFIDKNDLRDTFAALGRVNVKNEEIDEMIKEAPGPINFTVFLTMFGEKLKGADPEETILNAFKVFDPEGKGVLKADYVREMLTTQAERFSKDEIDQMFAAFPPDVTGNLDYKNLVHIITHGEEK.

The residue at position 2 (S2) is a N,N,N-trimethylserine. N14 is modified (deamidated asparagine). A phosphoserine mark is found at S15 and S19. 3 consecutive EF-hand domains span residues 24-59 (TQIQ…LGRV), 94-129 (DPEE…QAER), and 130-165 (FSKD…GEEK). Ca(2+) is bound by residues D37, N39, D41, and D48. T52 is modified (phosphothreonine).

As to quaternary structure, myosin is a hexamer of 2 heavy chains and 4 light chains. Interacts with MYOC. In terms of processing, N-terminus is methylated by METTL11A/NTM1. Post-translationally, phosphorylated by MYLK3 and MYLK2; promotes cardiac muscle contraction and function. Dephosphorylated by PPP1CB complexed to PPP1R12B. The phosphorylated form in adult is expressed as gradients across the heart from endocardium (low phosphorylation) to epicardium (high phosphorylation); regulates cardiac torsion and workload distribution.

It is found in the cytoplasm. The protein resides in the myofibril. It localises to the sarcomere. The protein localises to the a band. Functionally, contractile protein that plays a role in heart development and function. Following phosphorylation, plays a role in cross-bridge cycling kinetics and cardiac muscle contraction by increasing myosin lever arm stiffness and promoting myosin head diffusion; as a consequence of the increase in maximum contraction force and calcium sensitivity of contraction force. These events altogether slow down myosin kinetics and prolong duty cycle resulting in accumulated myosins being cooperatively recruited to actin binding sites to sustain thin filament activation as a means to fine-tune myofilament calcium sensitivity to force. During cardiogenesis plays an early role in cardiac contractility by promoting cardiac myofibril assembly. The protein is Myosin regulatory light chain 2, ventricular/cardiac muscle isoform of Oryctolagus cuniculus (Rabbit).